Reading from the N-terminus, the 573-residue chain is Transcription factor E3 (573 aa).

Ser47 carries the phosphoserine; by MTOR modification. The tract at residues 91 to 151 is disordered; sequence TLSASSSAEG…SPAPASPAIS (61 aa). A compositionally biased stretch (low complexity) spans 107-126; sequence SSSSSSRVLLRQQLMRAQAQ. Residues 127 to 136 are compositionally biased toward basic and acidic residues; it reads EQERRERREQ. The segment covering 137–151 has biased composition (low complexity); the sequence is ASSFPSPAPASPAIS. Arg186 carries the asymmetric dimethylarginine modification. Residues 209–248 form a disordered region; that stretch reads LASQALTPPPGGASVQPLPTPEAAHAPGPTSSAPNSPMAL. The segment at 258-269 is strong transcription activation domain; sequence EIDDVIDEIISL. Ser319 bears the Phosphoserine; by MTOR mark. Lys337 is covalently cross-linked (Glycyl lysine isopeptide (Lys-Gly) (interchain with G-Cter in SUMO2)). One can recognise a bHLH domain in the interval 344–397; it reads QKKDNHNLIERRRRFNINDRIKELGTLIPKSSDPEMRWNKGTILKASVDYIRKL. The Nuclear localization signal motif lies at 354-357; sequence RRRR. The leucine-zipper stretch occupies residues 407 to 428; the sequence is LESRQRSLEQANRSLQLRIQEL. Positions 531 to 573 are disordered; it reads VGGLSGGTLSPLRAASDPLLSSVSPAVSKASSRRSSFSMEEES. Residues 537–573 are compositionally biased toward low complexity; the sequence is GTLSPLRAASDPLLSSVSPAVSKASSRRSSFSMEEES. A phosphoserine mark is found at Ser540, Ser546, Ser552, Ser554, Ser558, and Ser566.

It belongs to the MiT/TFE family. In terms of assembly, homodimer and heterodimer; with TFEB or MITF. Interacts with RRAGC/RagC GDP-bound and RRAGD/RagD GDP-bound; promoting its recruitment to lysosomal membrane in the presence of nutrients. In terms of processing, phosphorylation ar Ser-47 and Ser-319 by MTOR via non-canonical mTORC1 pathway regulates its stability and subcellular location, respectively. When nutrients are present, phosphorylation by MTOR at Ser-47 promotes ubiquitination by the SCF(BTRC) complex, followed by degradation. When nutrients are present, phosphorylation by MTOR at Ser-319 also promotes association with 14-3-3/YWHA adapters and retention in the cytosol. Phosphorylation at Ser-47 plays a more critical role than phosphorylation at Ser-319 for TFE3 inactivation. Inhibition of mTORC1, starvation and lysosomal disruption, promotes dephosphorylation and transcription factor activity. Post-translationally, ubiquitinated by the SCF(BTRC) and SCF(FBXW11) complexes following phosphorylation at Ser-47 by MTOR, leading to its degradation by the proteasome. Sumoylated; does not affect dimerization with MITF.

The protein resides in the cytoplasm. The protein localises to the cytosol. Its subcellular location is the nucleus. It localises to the lysosome membrane. In terms of biological role, transcription factor that acts as a master regulator of lysosomal biogenesis and immune response. Specifically recognizes and binds E-box sequences (5'-CANNTG-3'); efficient DNA-binding requires dimerization with itself or with another MiT/TFE family member such as TFEB or MITF. Involved in the cellular response to amino acid availability by acting downstream of MTOR: in the presence of nutrients, TFE3 phosphorylation by MTOR promotes its inactivation. Upon starvation or lysosomal stress, inhibition of MTOR induces TFE3 dephosphorylation, resulting in transcription factor activity. Specifically recognizes and binds the CLEAR-box sequence (5'-GTCACGTGAC-3') present in the regulatory region of many lysosomal genes, leading to activate their expression, thereby playing a central role in expression of lysosomal genes. Maintains the pluripotent state of embryonic stem cells by promoting the expression of genes such as ESRRB; mTOR-dependent TFE3 cytosolic retention and inactivation promotes exit from pluripotency. Required to maintain the naive pluripotent state of hematopoietic stem cell; mTOR-dependent cytoplasmic retention of TFE3 promotes the exit of hematopoietic stem cell from pluripotency. TFE3 activity is also involved in the inhibition of neuronal progenitor differentiation. Acts as a positive regulator of browning of adipose tissue by promoting expression of target genes; mTOR-dependent phosphorylation promotes cytoplasmic retention of TFE3 and inhibits browning of adipose tissue. In association with TFEB, activates the expression of CD40L in T-cells, thereby playing a role in T-cell-dependent antibody responses in activated CD4(+) T-cells and thymus-dependent humoral immunity. Specifically recognizes the MUE3 box, a subset of E-boxes, present in the immunoglobulin enhancer. It also binds very well to a USF/MLTF site. May regulate lysosomal positioning in response to nutrient deprivation by promoting the expression of PIP4P1. The protein is Transcription factor E3 of Bos taurus (Bovine).